A 384-amino-acid chain; its full sequence is 4-hydroxy-3-methylbut-2-en-1-yl diphosphate synthase (flavodoxin) 1 (384 aa).

[4Fe-4S] cluster-binding residues include C281, C284, C316, and E323.

Belongs to the IspG family. The cofactor is [4Fe-4S] cluster.

It catalyses the reaction (2E)-4-hydroxy-3-methylbut-2-enyl diphosphate + oxidized [flavodoxin] + H2O + 2 H(+) = 2-C-methyl-D-erythritol 2,4-cyclic diphosphate + reduced [flavodoxin]. It participates in isoprenoid biosynthesis; isopentenyl diphosphate biosynthesis via DXP pathway; isopentenyl diphosphate from 1-deoxy-D-xylulose 5-phosphate: step 5/6. Its function is as follows. Converts 2C-methyl-D-erythritol 2,4-cyclodiphosphate (ME-2,4cPP) into 1-hydroxy-2-methyl-2-(E)-butenyl 4-diphosphate. This chain is 4-hydroxy-3-methylbut-2-en-1-yl diphosphate synthase (flavodoxin) 1, found in Streptomyces coelicolor (strain ATCC BAA-471 / A3(2) / M145).